The sequence spans 142 residues: MADQLTEEQIAEFKEAFSLFDKDGDGTITTKELGTVMRSLGQNPTEAELQDMINEVDADGNGTIDFPEFLTMMARKMKDTDSEEEIREAFRVFDKDGNGYISAAELRHVMTNLGEKLTDEEVDEMIREADIDGDGQVNYEEF.

A2 carries the N-acetylalanine modification. 4 EF-hand domains span residues 8–43, 44–79, 81–116, and 117–142; these read EQIA…LGQN, PTEA…KMKD, DSEE…LGEK, and LTDE…YEEF. Residues D21, D23, D25, T27, E32, D57, D59, N61, T63, E68, D94, D96, N98, Y100, and E105 each coordinate Ca(2+). N6,N6,N6-trimethyllysine is present on K116. Positions 130, 132, 134, 136, and 141 each coordinate Ca(2+).

The protein belongs to the calmodulin family.

Calmodulin mediates the control of a large number of enzymes, ion channels and other proteins by Ca(2+). Among the enzymes to be stimulated by the calmodulin-Ca(2+) complex are a number of protein kinases and phosphatases. The protein is Calmodulin-alpha of Arbacia punctulata (Punctuate sea urchin).